A 207-amino-acid chain; its full sequence is Small ribosomal subunit protein uS7y (207 aa).

A2 bears the N-acetylalanine mark.

The protein belongs to the universal ribosomal protein uS7 family. Expressed in root tips, lateral root primordia, leaf primordia, shoot apical meristem and vasculature of cotyledons.

The sequence is that of Small ribosomal subunit protein uS7y from Arabidopsis thaliana (Mouse-ear cress).